The sequence spans 596 residues: Arginine--tRNA ligase (596 aa).

A 'HIGH' region motif is present at residues 128-138; that stretch reads ANPTSSLHVGH.

This sequence belongs to the class-I aminoacyl-tRNA synthetase family. Monomer.

Its subcellular location is the cytoplasm. It carries out the reaction tRNA(Arg) + L-arginine + ATP = L-arginyl-tRNA(Arg) + AMP + diphosphate. The polypeptide is Arginine--tRNA ligase (Acinetobacter baumannii (strain SDF)).